A 361-amino-acid chain; its full sequence is Deoxyribonuclease-2-beta (361 aa).

The signal sequence occupies residues 1–27; that stretch reads MKQKMMARLLRTSFALLFLGLFGVLGA. N-linked (GlcNAc...) asparagine glycans are attached at residues Asn-81, Asn-103, Asn-119, and Asn-278.

It belongs to the DNase II family. Highly expressed in the eye lens and in salivary gland. Detected at lower levels in lung, prostate and lymph node. Isoform 2 is lung specific.

The protein resides in the lysosome. The enzyme catalyses Endonucleolytic cleavage to nucleoside 3'-phosphates and 3'-phosphooligonucleotide end-products.. Functionally, hydrolyzes DNA under acidic conditions. Does not require divalent cations for activity. Participates in the degradation of nuclear DNA during lens cell differentiation. This Homo sapiens (Human) protein is Deoxyribonuclease-2-beta (DNASE2B).